A 1066-amino-acid polypeptide reads, in one-letter code: Beta-galactosidase (1066 aa).

Residues asparagine 110 and aspartate 209 each contribute to the substrate site. Aspartate 209 is a binding site for Na(+). Mg(2+)-binding residues include glutamate 432, histidine 434, and glutamate 477. Substrate-binding positions include glutamate 477 and 553 to 556 (EYAH). Glutamate 477 serves as the catalytic Proton donor. Glutamate 553 (nucleophile) is an active-site residue. Mg(2+) is bound at residue asparagine 613. The Na(+) site is built by phenylalanine 617 and asparagine 620. Substrate contacts are provided by asparagine 620 and tryptophan 1041.

The protein belongs to the glycosyl hydrolase 2 family. As to quaternary structure, homotetramer. It depends on Mg(2+) as a cofactor. Na(+) serves as cofactor.

The enzyme catalyses Hydrolysis of terminal non-reducing beta-D-galactose residues in beta-D-galactosides.. This Yersinia pseudotuberculosis serotype O:1b (strain IP 31758) protein is Beta-galactosidase.